Reading from the N-terminus, the 643-residue chain is Probable potassium transport system protein Kup 2 (643 aa).

The segment at 1–20 is disordered; sequence MSSHVPSFLRGTPDMTAHGG. 12 consecutive transmembrane segments (helical) span residues 27–47, 70–90, 120–140, 157–177, 185–205, 231–251, 267–287, 300–320, 357–377, 389–409, 419–439, and 440–460; these read VAGLMLAAIGVVFGDIGTSPL, VLSLVFWAITIIVSFKYVIII, LMVSALGIFAAALFYGDSIIT, PHLEQWVVPLTIVILFVLFAI, VGKMFGPVMLVWFLTLAILGI, GWHAFLALGSVVLAVTGAEAL, WYLLVLPALILNYFGQGALLI, LAPASLALPLVILATLATVIA, IYLPFVNWLLMCMVMVLVVGF, VAVTGTMVIDALLVGTVMLLI, WLIGGFLVVDLAFFLANSIKI, and PDGGWFPLVVGGLLFTILTTW.

This sequence belongs to the HAK/KUP transporter (TC 2.A.72) family.

It localises to the cell inner membrane. The enzyme catalyses K(+)(in) + H(+)(in) = K(+)(out) + H(+)(out). Its function is as follows. Transport of potassium into the cell. Likely operates as a K(+):H(+) symporter. The polypeptide is Probable potassium transport system protein Kup 2 (Paramagnetospirillum magneticum (strain ATCC 700264 / AMB-1) (Magnetospirillum magneticum)).